Reading from the N-terminus, the 364-residue chain is MEQTLFNPSISMPKSFYHKHITISSRIQCQLSTNSPSSNTKTTTVTVPSKKTMGPYTGRDPNVKKPEWLRQRAPQGERFQEVKHSLSSLKLNTVCEEAQCPNIGECWNGGGDGIATATIMLLGDTCTRGCRFCAVKTSRNPSPPDPLEPQNTALAIASWGVDYIVLTSVDRDDLPDGGSGHFSETVQAMKKLKPEIMVECLTSDFRGDLEAVETLVHSGLDVFAHNIETVKRLQRIVRDPRAGYEQSLSVLKHAKHSKEGMITKSSIMLGLGETDDELKEAMADLRAIDVDILTLGQYLQPTPLHLTVKEYVTPEKFAFWKEYGESIGFRYVASGPMVRSSYRAGELFVKTMVKERSSNSAAKP.

Residues 1 to 70 constitute a chloroplast transit peptide; the sequence is MEQTLFNPSI…PNVKKPEWLR (70 aa). Residues 32–52 show a composition bias toward low complexity; sequence STNSPSSNTKTTTVTVPSKKT. Residues 32–64 form a disordered region; that stretch reads STNSPSSNTKTTTVTVPSKKTMGPYTGRDPNVK. The [4Fe-4S] cluster site is built by cysteine 95, cysteine 100, cysteine 106, cysteine 126, cysteine 130, cysteine 133, and serine 341. In terms of domain architecture, Radical SAM core spans 109-330; sequence GGGDGIATAT…KEYGESIGFR (222 aa).

The protein belongs to the radical SAM superfamily. Lipoyl synthase family. The cofactor is [4Fe-4S] cluster.

Its subcellular location is the plastid. It localises to the chloroplast. The enzyme catalyses [[Fe-S] cluster scaffold protein carrying a second [4Fe-4S](2+) cluster] + N(6)-octanoyl-L-lysyl-[protein] + 2 oxidized [2Fe-2S]-[ferredoxin] + 2 S-adenosyl-L-methionine + 4 H(+) = [[Fe-S] cluster scaffold protein] + N(6)-[(R)-dihydrolipoyl]-L-lysyl-[protein] + 4 Fe(3+) + 2 hydrogen sulfide + 2 5'-deoxyadenosine + 2 L-methionine + 2 reduced [2Fe-2S]-[ferredoxin]. It functions in the pathway protein modification; protein lipoylation via endogenous pathway; protein N(6)-(lipoyl)lysine from octanoyl-[acyl-carrier-protein]: step 2/2. Catalyzes the radical-mediated insertion of two sulfur atoms into the C-6 and C-8 positions of the octanoyl moiety bound to the lipoyl domains of lipoate-dependent enzymes, thereby converting the octanoylated domains into lipoylated derivatives. The protein is Lipoyl synthase, chloroplastic of Ricinus communis (Castor bean).